A 563-amino-acid polypeptide reads, in one-letter code: Arginine--tRNA ligase (563 aa).

The 'HIGH' region motif lies at 121-131 (PNIAKPFSIGH).

This sequence belongs to the class-I aminoacyl-tRNA synthetase family. As to quaternary structure, monomer.

The protein resides in the cytoplasm. The catalysed reaction is tRNA(Arg) + L-arginine + ATP = L-arginyl-tRNA(Arg) + AMP + diphosphate. The protein is Arginine--tRNA ligase of Streptococcus pyogenes serotype M18 (strain MGAS8232).